A 737-amino-acid chain; its full sequence is Catalase-peroxidase (737 aa).

Residues 1–33 are disordered; that stretch reads MPEATEHPPIGEAQTEPAQSGCPMVIKPPVEGG. The segment at residues 107–235 is a cross-link (tryptophyl-tyrosyl-methioninium (Trp-Tyr) (with M-261)); the sequence is WHAAGTYRVQ…LGASHMGLIY (129 aa). H108 functions as the Proton acceptor in the catalytic mechanism. The tryptophyl-tyrosyl-methioninium (Tyr-Met) (with W-107) cross-link spans 235-261; it reads YVNPEGPEGNPDPIAAAIDIRETFGRM. Residue H276 participates in heme binding.

It belongs to the peroxidase family. Peroxidase/catalase subfamily. Homodimer or homotetramer. Heme b serves as cofactor. In terms of processing, formation of the three residue Trp-Tyr-Met cross-link is important for the catalase, but not the peroxidase activity of the enzyme.

It catalyses the reaction H2O2 + AH2 = A + 2 H2O. The enzyme catalyses 2 H2O2 = O2 + 2 H2O. Functionally, bifunctional enzyme with both catalase and broad-spectrum peroxidase activity. May play a role in polycyclic aromatic hydrocarbon (PAH) metabolism. The polypeptide is Catalase-peroxidase (Mycolicibacterium vanbaalenii (Mycobacterium vanbaalenii)).